The chain runs to 290 residues: MKIAVYGKGGIGKSTTSCNTSIASARRGKRVLQIGCDPKHDSTFTLTGSLIPTIIDTSQSKDYHYEDVWPEDVIYKGYGGVDCVEVGGPPAGAGCGGYVVGETVKLLKELNAFYEYDIILFDVSGDVVCGGFVVLLNYADYCIIITDNGFDALFAVNCIAASVREKARTHSLRLAGSVGNRTSKRDLINRYVEACPMPVLEVSLLIEDIRVSRVKGKTSFEMVEFQPFLNYVCEFYLNIADQILSQPEGVIPKEIPDRELFSLLSDFYLNPTNNERENKNQETLLDFMII.

Residues 10 to 15 and Lys-39 each bind ATP; that span reads GIGKST. Ser-14 provides a ligand contact to Mg(2+). Residues Cys-95 and Cys-129 each contribute to the [4Fe-4S] cluster site. 180 to 181 contributes to the ATP binding site; the sequence is NR.

It belongs to the NifH/BchL/ChlL family. In terms of assembly, homodimer. Protochlorophyllide reductase is composed of three subunits; ChlL, ChlN and ChlB. [4Fe-4S] cluster serves as cofactor.

Its subcellular location is the plastid. It is found in the chloroplast. The catalysed reaction is chlorophyllide a + oxidized 2[4Fe-4S]-[ferredoxin] + 2 ADP + 2 phosphate = protochlorophyllide a + reduced 2[4Fe-4S]-[ferredoxin] + 2 ATP + 2 H2O. It participates in porphyrin-containing compound metabolism; chlorophyll biosynthesis (light-independent). Functionally, component of the dark-operative protochlorophyllide reductase (DPOR) that uses Mg-ATP and reduced ferredoxin to reduce ring D of protochlorophyllide (Pchlide) to form chlorophyllide a (Chlide). This reaction is light-independent. The L component serves as a unique electron donor to the NB-component of the complex, and binds Mg-ATP. The protein is Light-independent protochlorophyllide reductase iron-sulfur ATP-binding protein of Anthoceros angustus (Hornwort).